Here is a 283-residue protein sequence, read N- to C-terminus: ATP phosphoribosyltransferase (283 aa).

Belongs to the ATP phosphoribosyltransferase family. Long subfamily. It depends on Mg(2+) as a cofactor.

The protein resides in the cytoplasm. The catalysed reaction is 1-(5-phospho-beta-D-ribosyl)-ATP + diphosphate = 5-phospho-alpha-D-ribose 1-diphosphate + ATP. It functions in the pathway amino-acid biosynthesis; L-histidine biosynthesis; L-histidine from 5-phospho-alpha-D-ribose 1-diphosphate: step 1/9. Feedback inhibited by histidine. Catalyzes the condensation of ATP and 5-phosphoribose 1-diphosphate to form N'-(5'-phosphoribosyl)-ATP (PR-ATP). Has a crucial role in the pathway because the rate of histidine biosynthesis seems to be controlled primarily by regulation of HisG enzymatic activity. The protein is ATP phosphoribosyltransferase of Rhodococcus jostii (strain RHA1).